A 147-amino-acid polypeptide reads, in one-letter code: Large ribosomal subunit protein uL13 (147 aa).

Belongs to the universal ribosomal protein uL13 family. Part of the 50S ribosomal subunit.

Functionally, this protein is one of the early assembly proteins of the 50S ribosomal subunit, although it is not seen to bind rRNA by itself. It is important during the early stages of 50S assembly. This chain is Large ribosomal subunit protein uL13, found in Mycolicibacterium gilvum (strain PYR-GCK) (Mycobacterium gilvum (strain PYR-GCK)).